A 296-amino-acid chain; its full sequence is MSDAVTKTVAPLRRKANPINGKHTNGVTIDGIFDDHNRQIGPINSQMEDIAQKTDDGGGGEWTSKASFMTWTMHDIIYVARHHWIPCLFAAGVMFFTVVEYTFQMTPASSQPFDLGFVATRYLHSILASSPNLNTVLAALNTILVGMQTTYIGCTWAVEGRPRATIAALFMFTCRGILGYSTQLPRPQEFLGSGVDYPVGNVSFFLFYSGHVAGSMIASLDMKRMQRFRLAMVFDILNVLQSIRLLGTRGHYTIDIAVGVGAGILFDSLAGKYEEMSKRHLRNTRCSLISKDSLVT.

5 helical membrane passes run 83–103, 136–156, 165–182, 198–218, and 250–270; these read HWIPCLFAAGVMFFTVVEYTF, VLAALNTILVGMQTTYIGCTW, TIAALFMFTCRGILGYST, PVGNVSFFLFYSGHVAGSMIA, and GHYTIDIAVGVGAGILFDSLA. Catalysis depends on residues H211, H251, and D255.

Belongs to the phosphatidylcholine:diacylglycerol cholinephosphotransferase family.

The protein localises to the membrane. Its function is as follows. Functions as a phosphatidylcholine:diacylglycerol cholinephosphotransferase that catalyzes the transfer of the phosphocholine headgroup from phosphatidylcholine (PC) to diacylglycerol, a major reaction for the transfer of 18:1 into phosphatidylcholine for desaturation and also for the reverse transfer of 18:2 and 18:3 into the triacylglycerols synthesis pathway. This chain is Phosphatidylcholine:diacylglycerol cholinephosphotransferase 2, found in Arabidopsis thaliana (Mouse-ear cress).